The following is a 231-amino-acid chain: uncharacterized protein (231 aa).

10 to 34 (VVTGAGSGIGEAIATLLHEEGAKVV) contributes to the NADP(+) binding site. Serine 140 contacts substrate. The active-site Proton acceptor is tyrosine 153.

The protein belongs to the short-chain dehydrogenases/reductases (SDR) family.

This is an uncharacterized protein from Staphylococcus aureus (strain N315).